A 951-amino-acid chain; its full sequence is MTINLGTANEFIARHIGPRAADEQAMLTALGFDSLDAMTAAVIPDSIKGTSVLGSHDGQSEADALAALKAIAGKNQLFKSYIGQGYYNTHTPAPILRNLLENPAWYTAYTPYQPEISQGRLEALLNFQTLISDLTGLPIANASLLDEATAAAEAMTFCKRLSKNKSSHAFFASVHCHPQTLDVLRTRAEPLGIEVVVGDERELGDVSAFFGALLQYPASNGEVFDYREVVQRFHAANALVAVAADLLALTLLTPPGEFDADVAIGSAQRFGVPLGFGGPHAAYFATRDAFKRDMPGRLVGVSIDRFGKTALRLAMQTREQHIRREKATSNICTAQVLLANIASMFAVYHGPAGLKRIAERTHALTAILAAGLKALGVQVVGASAFDTLTLATGTATASLHDKARAQGINLRQIDAAHVGLSLDETSTQADVESLWQLLGGEQAQPDFTALAASTGSLLPAALLRQSAILEHPVFNRYHSETELMRYLRRLADKDLALDRSMIPLGSCTMKLNAASEMIPVTWAEFGNLHPFAPAEQSQGYLQMTTELEAMLCAATGYDAVSLQPNAGSQGEYAGLLAIRAYHRSRGEGHRDICLIPSSAHGTNPATAHMAGMRVVVTACDARGNVDVEDLRAKAIEHRERLAAIMITYPSTHGVFEEAIGEICAIIHDNGGQVYIDGANMNAMVGLCAPGKFGGDVSHLNLHKTFCIPHGGGGPGVGPIGVKSHLAPFLPGHAQLENTQGAVCAAPFGSASILPITWMYIRMMGGAGLKRASQMAILNANYIARRLEEHYPVLYTGGNGLVAHECILDLRPLKDTSGISVDDVAKRLIDFGFHAPTMSFPVAGTLMIEPTESESKEELDRFCNAMIQIREEIRAVEDGSLDKDDNPLKNAPHTAAELVGEWTHGYSREQAVYPLASLVEGKYWPPVGRVDNVFGDRNLVCACPSIESYQDA.

Lysine 703 is modified (N6-(pyridoxal phosphate)lysine).

It belongs to the GcvP family. The glycine cleavage system is composed of four proteins: P, T, L and H. Pyridoxal 5'-phosphate serves as cofactor.

It carries out the reaction N(6)-[(R)-lipoyl]-L-lysyl-[glycine-cleavage complex H protein] + glycine + H(+) = N(6)-[(R)-S(8)-aminomethyldihydrolipoyl]-L-lysyl-[glycine-cleavage complex H protein] + CO2. The glycine cleavage system catalyzes the degradation of glycine. The P protein binds the alpha-amino group of glycine through its pyridoxal phosphate cofactor; CO(2) is released and the remaining methylamine moiety is then transferred to the lipoamide cofactor of the H protein. The sequence is that of Glycine dehydrogenase (decarboxylating) 1 (gcvP1) from Pseudomonas putida (strain ATCC 47054 / DSM 6125 / CFBP 8728 / NCIMB 11950 / KT2440).